The following is a 536-amino-acid chain: Phosphoenolpyruvate carboxykinase (ATP) (536 aa).

Substrate contacts are provided by arginine 61, tyrosine 195, and lysine 201. ATP-binding positions include lysine 201, histidine 220, and 236–244 (GLSGTGKTT). Positions 201 and 220 each coordinate Mn(2+). Mn(2+) is bound at residue aspartate 257. ATP contacts are provided by glutamate 285, arginine 322, and threonine 447. Arginine 322 contributes to the substrate binding site.

This sequence belongs to the phosphoenolpyruvate carboxykinase (ATP) family. Requires Mn(2+) as cofactor.

It is found in the cytoplasm. The catalysed reaction is oxaloacetate + ATP = phosphoenolpyruvate + ADP + CO2. The protein operates within carbohydrate biosynthesis; gluconeogenesis. Its function is as follows. Involved in the gluconeogenesis. Catalyzes the conversion of oxaloacetate (OAA) to phosphoenolpyruvate (PEP) through direct phosphoryl transfer between the nucleoside triphosphate and OAA. In Rhizobium rhizogenes (strain K84 / ATCC BAA-868) (Agrobacterium radiobacter), this protein is Phosphoenolpyruvate carboxykinase (ATP).